Here is a 2280-residue protein sequence, read N- to C-terminus: Metacaspase-3 (2280 aa).

7 disordered regions span residues 56-83 (ILSK…DRED), 202-284 (YSTE…THRG), 791-819 (YKNS…MVNN), 931-954 (DDNS…RYDK), 994-1015 (SGKY…DDSE), 1278-1306 (KTNN…NPFI), and 1469-1500 (KAPT…NANA). The segment covering 63–83 (NKNENIKKRINEKDNDTDRED) has biased composition (basic and acidic residues). 2 stretches are compositionally biased toward polar residues: residues 205–219 (EHTQ…TSKR) and 228–278 (DKAQ…NRKG). Low complexity-rich tracts occupy residues 793–819 (NSMN…MVNN) and 931–941 (DDNSVQDSFFS). Low complexity-rich tracts occupy residues 1278–1303 (KTNN…NNSN) and 1482–1500 (APTN…NANA).

This sequence belongs to the peptidase C14B family.

Functionally, protease that cleaves specifically after arginine or lysine residues. The chain is Metacaspase-3 from Plasmodium falciparum (isolate 3D7).